Consider the following 257-residue polypeptide: NAD-capped RNA hydrolase NudC (257 aa).

Arginine 69 provides a ligand contact to substrate. The Zn(2+) site is built by cysteine 98 and cysteine 101. Glutamate 111 lines the substrate pocket. Zn(2+)-binding residues include cysteine 116 and cysteine 119. Tyrosine 124 is a substrate binding site. Residues proline 125 to threonine 248 form the Nudix hydrolase domain. Residues alanine 158, glutamate 174, and glutamate 178 each contribute to the a divalent metal cation site. The Nudix box motif lies at glycine 159–glycine 180. Glutamine 192–serine 199 is a binding site for substrate. Glutamate 219 is a binding site for a divalent metal cation. Alanine 241 is a binding site for substrate.

This sequence belongs to the Nudix hydrolase family. NudC subfamily. In terms of assembly, homodimer. Requires Mg(2+) as cofactor. It depends on Mn(2+) as a cofactor. Zn(2+) serves as cofactor.

The catalysed reaction is a 5'-end NAD(+)-phospho-ribonucleoside in mRNA + H2O = a 5'-end phospho-adenosine-phospho-ribonucleoside in mRNA + beta-nicotinamide D-ribonucleotide + 2 H(+). It catalyses the reaction NAD(+) + H2O = beta-nicotinamide D-ribonucleotide + AMP + 2 H(+). The enzyme catalyses NADH + H2O = reduced beta-nicotinamide D-ribonucleotide + AMP + 2 H(+). MRNA decapping enzyme that specifically removes the nicotinamide adenine dinucleotide (NAD) cap from a subset of mRNAs by hydrolyzing the diphosphate linkage to produce nicotinamide mononucleotide (NMN) and 5' monophosphate mRNA. The NAD-cap is present at the 5'-end of some mRNAs and stabilizes RNA against 5'-processing. Has preference for mRNAs with a 5'-end purine. Catalyzes the hydrolysis of a broad range of dinucleotide pyrophosphates. This Klebsiella pneumoniae subsp. pneumoniae (strain ATCC 700721 / MGH 78578) protein is NAD-capped RNA hydrolase NudC.